Consider the following 446-residue polypeptide: Putative F-box protein At1g32660 (446 aa).

Basic and acidic residues-rich tracts occupy residues 1 to 12 and 43 to 57; these read MKRKDDDQEDRS and NKLE…NPSK. Positions 1–57 are disordered; sequence MKRKDDDQEDRSCSSASKLDPIPLDLKMATVPTKSHMKKSHQNKLEEDEKEDTNPSK. One can recognise an F-box domain in the interval 57–107; it reads KLELDSLPLDLKMAILTRIPAKSLMKLRCVSKMWSSIIRSRGFIDSYYAIS.

The chain is Putative F-box protein At1g32660 from Arabidopsis thaliana (Mouse-ear cress).